A 231-amino-acid chain; its full sequence is Large ribosomal subunit protein uL1 (231 aa).

This sequence belongs to the universal ribosomal protein uL1 family. In terms of assembly, part of the 50S ribosomal subunit.

Its function is as follows. Binds directly to 23S rRNA. The L1 stalk is quite mobile in the ribosome, and is involved in E site tRNA release. In terms of biological role, protein L1 is also a translational repressor protein, it controls the translation of the L11 operon by binding to its mRNA. The sequence is that of Large ribosomal subunit protein uL1 from Agrobacterium fabrum (strain C58 / ATCC 33970) (Agrobacterium tumefaciens (strain C58)).